Consider the following 287-residue polypeptide: Large ribosomal subunit protein uL3 (287 aa).

The interval 228-287 (KAPEAKPAKLSKKKQAKELAKAQAANQQTVEAKVDTPVVEPKPTEVKKAAPVVEKKGEDK) is disordered. Basic and acidic residues predominate over residues 269-287 (KPTEVKKAAPVVEKKGEDK).

It belongs to the universal ribosomal protein uL3 family. Part of the 50S ribosomal subunit. Forms a cluster with proteins L14 and L19.

Its function is as follows. One of the primary rRNA binding proteins, it binds directly near the 3'-end of the 23S rRNA, where it nucleates assembly of the 50S subunit. The polypeptide is Large ribosomal subunit protein uL3 (Mycoplasma pneumoniae (strain ATCC 29342 / M129 / Subtype 1) (Mycoplasmoides pneumoniae)).